Consider the following 165-residue polypeptide: RxLR effector protein CRE12 (165 aa).

The N-terminal stretch at Met1 to Ala23 is a signal peptide. A RxLR-dEER motif is present at residues Arg40–Arg59.

The protein belongs to the RxLR effector family.

It localises to the secreted. Its subcellular location is the host cell. Functionally, effector that is involved in host plant infection. Contributes to virulence during the early infection stage, by inhibiting plant defense responses induced by both PAMP-triggered immunity (PTI) and effector-triggered immunity (ETI). The chain is RxLR effector protein CRE12 from Phytophthora infestans (strain T30-4) (Potato late blight agent).